The chain runs to 347 residues: Mitochondrial genome maintenance exonuclease 1 (347 aa).

Active-site residues include aspartate 246, aspartate 259, and lysine 261.

This sequence belongs to the MGME1 family.

Its subcellular location is the mitochondrion. Functionally, single-stranded DNA (ssDNA) metal-dependent exonuclease involved in mitochondrial genome maintenance. Has preference for 5'-3' exonuclease activity. Necessary for maintenance of proper 7S DNA levels. Probably involved in mitochondrial DNA (mtDNA) repair. Specifically binds 5-hydroxymethylcytosine (5hmC)-containing DNA in stem cells. This is Mitochondrial genome maintenance exonuclease 1 (mgme1) from Xenopus tropicalis (Western clawed frog).